Consider the following 27-residue polypeptide: Natriuretic peptides A (27 aa).

Residues Cys-7 and Cys-23 are joined by a disulfide bond.

It belongs to the natriuretic peptide family.

The protein localises to the secreted. Its function is as follows. Hormone playing a key role in cardiovascular homeostasis through regulation of natriuresis, diuresis, and vasodilation. Has a cGMP-stimulating activity. This chain is Natriuretic peptides A (nppa), found in Anguilla japonica (Japanese eel).